The following is a 482-amino-acid chain: MAWGPDNVRKWSSLALLAIVGTALTAATDPGFVARISQKGLDFVCQESMVELQKELLAISIPDFSGDFKIKHLGKGTYEFYSMAVEGFHIPDPQIKLLPSDGLQLSITSASIKISGRWKYRKNILKASGNFQLSIQGVSIIADLILGNDPSGRITITCSTCDSHINSVRIKVSGSMLGWLIQLFHRKIETSLKKTIYKKICKIVRNSVSAKLQPYVKTLPVVAKVDDITSIDYSLLAPPMTTDKFLEGQLRGEFFWRGHHGPFPAVPPVMNILPNNNYMVCMGISDYFFNTAEFAYQESETLKITLRDQLLAKDARYHLNTDFLKTFLPEVAKKFPSMGLQLLISAPLFAHLNIQPSGLSLSPNLETRAFVVLPNSSLIPLFLLGMKTNASLEVNAMKNRLIGEMKLGRLLLELKQSNFGSFKVELLEDVINYLMSTMVLPKINEKLRRGFPLPLPAGIQLINSILYSSQNFLLLEADLHRT.

The N-terminal stretch at 1-27 (MAWGPDNVRKWSSLALLAIVGTALTAA) is a signal peptide. The central sheet, part 1 stretch occupies residues 28–38 (TDPGFVARISQ). Residues 37–219 (SQKGLDFVCQ…AKLQPYVKTL (183 aa)) are N-terminal barrel. Residues Cys-161 and Cys-201 are joined by a disulfide bond. The segment at 221–285 (VVAKVDDITS…NNYMVCMGIS (65 aa)) is central sheet, part 2. Positions 235–240 (LLAPPM) are cleavage sites for elastase. The segment at 286 to 456 (DYFFNTAEFA…LRRGFPLPLP (171 aa)) is C-terminal barrel. Asn-375 and Asn-389 each carry an N-linked (GlcNAc...) asparagine glycan. A central sheet, part 3 region spans residues 463 to 482 (NSILYSSQNFLLLEADLHRT).

The protein belongs to the BPI/LBP/Plunc superfamily. BPI/LBP family. As to quaternary structure, monomer. Homodimer; disulfide-linked.

It localises to the secreted. Its subcellular location is the cytoplasmic granule membrane. Functionally, the cytotoxic action of BPI is limited to many species of Gram-negative bacteria; this specificity may be explained by a strong affinity of the very basic N-terminal half for the negatively charged lipopolysaccharides that are unique to the Gram-negative bacterial outer envelope. The protein is Bactericidal permeability-increasing protein (Bpi) of Rattus norvegicus (Rat).